The sequence spans 439 residues: tRNA-2-methylthio-N(6)-dimethylallyladenosine synthase (439 aa).

The region spanning 2-115 (KGLYIKTYGC…LPELIVKASR (114 aa)) is the MTTase N-terminal domain. Residues Cys-11, Cys-47, Cys-78, Cys-155, Cys-159, and Cys-162 each contribute to the [4Fe-4S] cluster site. One can recognise a Radical SAM core domain in the interval 141–372 (NSQGSSAFLA…QKLISKQQLE (232 aa)). The 65-residue stretch at 375 to 439 (QSMVGKTIPV…QSSLLGCAFH (65 aa)) folds into the TRAM domain.

This sequence belongs to the methylthiotransferase family. MiaB subfamily. As to quaternary structure, monomer. [4Fe-4S] cluster serves as cofactor.

The protein localises to the cytoplasm. It carries out the reaction N(6)-dimethylallyladenosine(37) in tRNA + (sulfur carrier)-SH + AH2 + 2 S-adenosyl-L-methionine = 2-methylsulfanyl-N(6)-dimethylallyladenosine(37) in tRNA + (sulfur carrier)-H + 5'-deoxyadenosine + L-methionine + A + S-adenosyl-L-homocysteine + 2 H(+). In terms of biological role, catalyzes the methylthiolation of N6-(dimethylallyl)adenosine (i(6)A), leading to the formation of 2-methylthio-N6-(dimethylallyl)adenosine (ms(2)i(6)A) at position 37 in tRNAs that read codons beginning with uridine. The sequence is that of tRNA-2-methylthio-N(6)-dimethylallyladenosine synthase from Wolbachia pipientis wMel.